The sequence spans 176 residues: Immunity factor for TNT homolog (176 aa).

As to quaternary structure, interacts with the tuberculosis necrotizing toxin (TNT) homolog, the C-terminal domain of the outer membrane channel protein CpnT.

Antitoxin for tuberculosis necrotizing toxin (TNT) homolog. Acts by binding directly to TNT, which inhibits NAD(+) glycohydrolase activity of TNT and protects M.bovis from self-poisoning. The polypeptide is Immunity factor for TNT homolog (Mycobacterium bovis (strain BCG / Pasteur 1173P2)).